Reading from the N-terminus, the 228-residue chain is Gliolectin (228 aa).

Residues 1 to 120 (MLCPPMALGP…NPKAVSQAPR (120 aa)) lie on the Cytoplasmic side of the membrane. A helical; Signal-anchor for type II membrane protein transmembrane segment spans residues 121–137 (GMALTPAQISASAKLIL). At 138-228 (QKCPESDRKK…GTSELADQKQ (91 aa)) the chain is on the extracellular side. A disordered region spans residues 141 to 228 (PESDRKKSNG…GTSELADQKQ (88 aa)). Residues asparagine 149, asparagine 156, asparagine 198, asparagine 199, asparagine 205, and asparagine 218 are each glycosylated (N-linked (GlcNAc...) asparagine). Residues 195–213 (NNNNNSSSSNNNSNMNINN) show a composition bias toward low complexity. Polar residues predominate over residues 218-228 (NGTSELADQKQ).

Expressed by a subset of glial cells found at the midline of the embryo stage 12 nervous system. Expression is highest during the formation of the embryonic axonal commissures, a process requiring midline glial cell function (at protein level).

The protein resides in the membrane. Its function is as follows. Has a role in intercellular carbohydrate-mediated cell adhesion. The polypeptide is Gliolectin (Drosophila melanogaster (Fruit fly)).